The following is a 478-amino-acid chain: Glutamate--tRNA ligase (478 aa).

Positions 8–18 match the 'HIGH' region motif; that stretch reads PSPTGYLHLGN. The 'KMSKS' region motif lies at 248-252; the sequence is KLSKR. K251 is an ATP binding site.

This sequence belongs to the class-I aminoacyl-tRNA synthetase family. Glutamate--tRNA ligase type 1 subfamily. Monomer.

The protein resides in the cytoplasm. The enzyme catalyses tRNA(Glu) + L-glutamate + ATP = L-glutamyl-tRNA(Glu) + AMP + diphosphate. In terms of biological role, catalyzes the attachment of glutamate to tRNA(Glu) in a two-step reaction: glutamate is first activated by ATP to form Glu-AMP and then transferred to the acceptor end of tRNA(Glu). This Sulfurihydrogenibium sp. (strain YO3AOP1) protein is Glutamate--tRNA ligase.